The sequence spans 469 residues: Probable Xaa-Pro aminopeptidase AN0832 (469 aa).

The Mn(2+) site is built by Asp260, Asp271, Glu398, and Glu437.

It belongs to the peptidase M24B family. Mn(2+) serves as cofactor.

The catalysed reaction is Release of any N-terminal amino acid, including proline, that is linked to proline, even from a dipeptide or tripeptide.. In terms of biological role, catalyzes the removal of a penultimate prolyl residue from the N-termini of peptides. This is Probable Xaa-Pro aminopeptidase AN0832 from Emericella nidulans (strain FGSC A4 / ATCC 38163 / CBS 112.46 / NRRL 194 / M139) (Aspergillus nidulans).